Consider the following 729-residue polypeptide: MEEEGIRNFKELRAKFQKFNAAPLPGPMRFPAGVSRKHDRGSTQPAQDLANRKCLSSHHHQTPSHSSTGVSQPLKNQTLKSAQGDELQKTSSSSGTPEKSTVCPERDFQKAAVPLDVTKSRAKTSNEEKGMTLSSFRYKLWNWEKVSSQNGEMSPAPLLTNGGIKTFHFEGQKTMGLAQDKPEKSLKATGAQTLPPQSHSMAQRKSPVTSKASSVSLPPHSRKSTKSPATEGSHRSSQCQPVYECELDSLVPEKPQSRHCRLPKTKPLPSIETLGPPPPKPSKPPFVNLYAFHRLPATVTKTPKEETMKEGPLSPDSAELEEAHNYDTTISYLRHSGNSINLCAEGESTEATYEIEIEELQKPWRSFFLPELSPRPKEEENTMEEKESWESEPLEPRKELHPSRPPKVVVYKETPGKTQMAGVHEDRRSVPAGNQEAMTDIMQNRLFPEDVTLTRHSQDKSGYVEALEVTKETPSPSTIRSSSSSEKTYDAVECSREDVRKWDFSSSFTSDSEENCEEMYEDIYKAKNDDPKTEVAGRTALRKLQQIFRKENVVFRMKKTKSKEIVSNGFSVSLPDLGPRSQDDSQDGIIYDDVDTREKESNDEDKVKTWKTKFLIPKGKKWGKGSQGSKSFSPRHFFRTKKQKLEKNRMEKEEKLFRERFQYGKEILVINRAVACASNSRNGMFDLPIIPGEQLEVIDTTEQNLVICRNSKGKYGYVLVEHLDFKHQG.

Disordered stretches follow at residues 18-130 (KFNA…EEKG), 170-320 (EGQK…SAEL), 371-408 (ELSP…PPKV), and 469-490 (VTKE…KTYD). Composition is skewed to polar residues over residues 69-81 (GVSQ…TLKS), 89-99 (KTSSSSGTPEK), 190-216 (GAQT…SSVS), and 226-240 (KSPA…SQCQ). Over residues 275 to 284 (GPPPPKPSKP) the composition is skewed to pro residues. The segment covering 374–402 (PRPKEEENTMEEKESWESEPLEPRKELHP) has biased composition (basic and acidic residues). A compositionally biased stretch (low complexity) spans 473–485 (TPSPSTIRSSSSS). Tyr-489 bears the Phosphotyrosine mark. The short motif at 520–523 (YEDI) is the SH2-binding; to LCP2 element. Residues 576–603 (DLGPRSQDDSQDGIIYDDVDTREKESND) are disordered. The span at 584–593 (DSQDGIIYDD) shows a compositional bias: acidic residues. At Tyr-591 the chain carries Phosphotyrosine. Over residues 594–603 (VDTREKESND) the composition is skewed to basic and acidic residues. The SH3 domain occupies 668–728 (LVINRAVACA…LVEHLDFKHQ (61 aa)).

Interacts with SKAP1, LCK and FYN. The phosphorylated form interacts with LCP2. In terms of processing, phosphorylation is required for its function in T-cell activation.

It is found in the membrane raft. In terms of biological role, adapter protein that plays a role in T-cell receptor (TCR)-mediated activation of signaling pathways. Required for T-cell activation and integrin-mediated T-cell adhesion in response to TCR stimulation. This is FYN-binding protein 2 from Mus musculus (Mouse).